The chain runs to 75 residues: UPF0352 protein YejL (75 aa).

Belongs to the UPF0352 family.

This chain is UPF0352 protein YejL, found in Salmonella agona (strain SL483).